Reading from the N-terminus, the 247-residue chain is Eukaryotic translation initiation factor 6-1 (247 aa).

It belongs to the eIF-6 family. As to quaternary structure, monomer. Associates with the 60S ribosomal subunit.

The protein resides in the cytoplasm. It is found in the nucleus. It localises to the nucleolus. Binds to the 60S ribosomal subunit and prevents its association with the 40S ribosomal subunit to form the 80S initiation complex in the cytoplasm. May also be involved in ribosome biogenesis. The chain is Eukaryotic translation initiation factor 6-1 from Arabidopsis thaliana (Mouse-ear cress).